We begin with the raw amino-acid sequence, 832 residues long: Protein P (832 aa).

Positions 1–177 (MPLSYQHFRR…FCGSPYSWEQ (177 aa)) are terminal protein domain (TP). Positions 178–335 (DLQHGAESIH…YCLSLIVNLL (158 aa)) are spacer. 2 disordered regions span residues 186-218 (IHQQ…QSQQ) and 239-266 (TARR…SCLY). Positions 336–679 (EDWGPCDEYG…YLNLYPVARQ (344 aa)) are polymerase/reverse transcriptase domain (RT). A Reverse transcriptase domain is found at 346–589 (EHHIRIPRTP…YSLHFMGYVI (244 aa)). 3 residues coordinate Mg(2+): D418, D540, and D541.

This sequence belongs to the hepadnaviridae P protein family.

It carries out the reaction DNA(n) + a 2'-deoxyribonucleoside 5'-triphosphate = DNA(n+1) + diphosphate. It catalyses the reaction Endonucleolytic cleavage to 5'-phosphomonoester.. Its activity is regulated as follows. Activated by host HSP70 and HSP40 in vitro to be able to bind the epsilon loop of the pgRNA. Because deletion of the RNase H region renders the protein partly chaperone-independent, the chaperones may be needed indirectly to relieve occlusion of the RNA-binding site by this domain. Inhibited by several reverse-transcriptase inhibitors: Lamivudine, Adefovir and Entecavir. Its function is as follows. Multifunctional enzyme that converts the viral RNA genome into dsDNA in viral cytoplasmic capsids. This enzyme displays a DNA polymerase activity that can copy either DNA or RNA templates, and a ribonuclease H (RNase H) activity that cleaves the RNA strand of RNA-DNA heteroduplexes in a partially processive 3'- to 5'-endonucleasic mode. Neo-synthesized pregenomic RNA (pgRNA) are encapsidated together with the P protein, and reverse-transcribed inside the nucleocapsid. Initiation of reverse-transcription occurs first by binding the epsilon loop on the pgRNA genome, and is initiated by protein priming, thereby the 5'-end of (-)DNA is covalently linked to P protein. Partial (+)DNA is synthesized from the (-)DNA template and generates the relaxed circular DNA (RC-DNA) genome. After budding and infection, the RC-DNA migrates in the nucleus, and is converted into a plasmid-like covalently closed circular DNA (cccDNA). The activity of P protein does not seem to be necessary for cccDNA generation, and is presumably released from (+)DNA by host nuclear DNA repair machinery. The polypeptide is Protein P (Homo sapiens (Human)).